The chain runs to 71 residues: MKQGIHPKYEEVTANCSCGNVIKIRSTVGHDLNLDVCGECHPFYTGKQRDVATGGRVDRFNKRFSVPGAKK.

Positions 16, 18, 37, and 40 each coordinate Zn(2+).

Belongs to the bacterial ribosomal protein bL31 family. Type A subfamily. In terms of assembly, part of the 50S ribosomal subunit. Requires Zn(2+) as cofactor.

Its function is as follows. Binds the 23S rRNA. The chain is Large ribosomal subunit protein bL31 from Serratia proteamaculans (strain 568).